The following is a 566-amino-acid chain: Mucolipin-2 (566 aa).

The Cytoplasmic portion of the chain corresponds to 1 to 65 (MPGDEETLDL…YRARRQIPWK (65 aa)). Residues 66–86 (LGLQILKIVMVTTQLVRFGLS) form a helical membrane-spanning segment. Residues 87-288 (NQLVVAFKED…ISGSTQRSTH (202 aa)) are Extracellular-facing. Residues 107 to 123 (KGFSGVDEDDYSCSIYT) form an extracellular/lumenal pore loop region. Intrachain disulfides connect Cys164-Cys190 and Cys243-Cys274. The helical transmembrane segment at 289–309 (YLLVFDVFVIMICLASLILCT) threads the bilayer. Residues 310–346 (RSIVLALRLRKRFLNFFLEKYKQRVCGADQWEFVNGW) are Cytoplasmic-facing. The helical transmembrane segment at 347 to 367 (YVLVTISDLMTIIGSILKMEI) threads the bilayer. Topologically, residues 368–376 (KAKKLTNYD) are extracellular. Residues 377 to 397 (VCSILLGTSTLFVWVGVIRYL) form a helical membrane-spanning segment. At 398–419 (GYFQTYNVLILTMQASLPKVLR) the chain is on the cytoplasmic side. Residues 420–440 (FCACAGMIYLGYTFCGWIVLG) traverse the membrane as a helical segment. Residues 441 to 448 (PYHEKFEN) are Extracellular-facing. The pore-forming intramembrane region spans 449–469 (LNIVAECLFSLVNGDDMFATF). Residues 461–464 (NGDD) carry the Selectivity filter motif. At 470–480 (AQIQQKSILVW) the chain is on the extracellular side. The chain crosses the membrane as a helical span at residues 481–502 (LFSRLYLYSFISLFIYMVLSLF). Residues 503–566 (IALITDSYHT…RSNDHLILID (64 aa)) lie on the Cytoplasmic side of the membrane.

It belongs to the transient receptor (TC 1.A.4) family. Polycystin subfamily. MCOLN2 sub-subfamily. Forms homooligomeric complexes; probably tetrameric. Can heterooligomerize with MCOLN1; heteromeric assemblies have different channel properties as compared to the respective homooligomers and may be tissue-specific. Interacts with TMEM176A. In terms of tissue distribution, expressed in activated macrophages and microglia (at protein level). Isoform 1 is widely expressed at very low levels. As to expression, isoform 2 is expressed at high levels in lymphoid tissues (thymus and spleen) and kidney, and at moderate levels in heart, lung, liver and stomach.

The protein localises to the cell membrane. It localises to the lysosome membrane. The protein resides in the recycling endosome membrane. It catalyses the reaction Ca(2+)(in) = Ca(2+)(out). The enzyme catalyses Fe(2+)(in) = Fe(2+)(out). Fe(2+) channel activity is potentiated by low pH. In terms of biological role, nonselective cation channel probably playing a role in the regulation of membrane trafficking events. Acts as a Ca(2+)-permeable cation channel with inwardly rectifying activity. May activate ARF6 and be involved in the trafficking of GPI-anchored cargo proteins to the cell surface via the ARF6-regulated recycling pathway. May play a role in immune processes. In adaptive immunity, TRPML2 and TRPML1 may play redundant roles in the function of the specialized lysosomes of B cells. In the innate immune response, may play a role in the regulation of chemokine secretion and macrophage migration. Through a possible and probably tissue-specific heteromerization with MCOLN1 may be at least in part involved in many lysosome-dependent cellular events. Also functions as a Fe(2+) permeable channel. The chain is Mucolipin-2 (Mcoln2) from Mus musculus (Mouse).